We begin with the raw amino-acid sequence, 1122 residues long: Protein phosphatase 1 regulatory subunit 3A (1122 aa).

Positions 32–58 (TFQPGFSPQPSRRGSDSSEDIYLDTPS) are disordered. Phosphoserine; by GSK3 occurs at positions 38 and 42. Serine 46 bears the Phosphoserine; by PKA and ISPK mark. Phosphoserine is present on serine 49. A Phosphothreonine modification is found at threonine 56. The PP1-binding motif signature appears at 62–65 (RRVS). Serine 65 carries the phosphoserine; by PKA modification. The CBM21 domain maps to 122–230 (QLQIQKAILE…NNNGTNYTFI (109 aa)). Disordered stretches follow at residues 332–351 (STAS…NFPN), 395–422 (SSGD…LGDT), 496–516 (CLKE…NGKD), and 640–668 (GINS…SREN). Composition is skewed to basic and acidic residues over residues 395-405 (SSGDDCTHQPS) and 499-516 (ESTE…NGKD). Residues 640 to 662 (GINSEDQDNSPQHKQSWNVLESQ) are compositionally biased toward polar residues. Serine 844 bears the Phosphoserine mark. Positions 963 to 977 (IEKHPYPESKPEEVS) are enriched in basic and acidic residues. Disordered regions lie at residues 963-983 (IEKH…SGIV) and 1025-1058 (RHEN…PVEE). 2 stretches are compositionally biased toward polar residues: residues 1031-1040 (LVSSGQSLYT) and 1048-1058 (SSASTSLPVEE). Residues 1078–1098 (YFLLFLIFLITVYHYDLMIGL) form a helical membrane-spanning segment.

Interacts with PPP1CC catalytic subunit of PP1, and associates with glycogen. Phosphorylation at Ser-46 by ISPK stimulates the dephosphorylation of glycogen synthase and phosphorylase kinase. Skeletal muscle and heart.

Its subcellular location is the membrane. Its function is as follows. Seems to act as a glycogen-targeting subunit for PP1. PP1 is essential for cell division, and participates in the regulation of glycogen metabolism, muscle contractility and protein synthesis. Plays an important role in glycogen synthesis but is not essential for insulin activation of glycogen synthase. The polypeptide is Protein phosphatase 1 regulatory subunit 3A (PPP1R3A) (Homo sapiens (Human)).